Here is a 262-residue protein sequence, read N- to C-terminus: Adenosylcobinamide-GDP ribazoletransferase (262 aa).

5 consecutive transmembrane segments (helical) span residues 41 to 61 (AFPL…FILG), 65 to 85 (ASSL…TGAL), 115 to 132 (IGTY…LRVS), 134 to 156 (LAAF…TAAL), and 195 to 215 (GVLL…AVWL).

It belongs to the CobS family. Requires Mg(2+) as cofactor.

The protein localises to the cell inner membrane. It catalyses the reaction alpha-ribazole + adenosylcob(III)inamide-GDP = adenosylcob(III)alamin + GMP + H(+). The catalysed reaction is alpha-ribazole 5'-phosphate + adenosylcob(III)inamide-GDP = adenosylcob(III)alamin 5'-phosphate + GMP + H(+). It participates in cofactor biosynthesis; adenosylcobalamin biosynthesis; adenosylcobalamin from cob(II)yrinate a,c-diamide: step 7/7. In terms of biological role, joins adenosylcobinamide-GDP and alpha-ribazole to generate adenosylcobalamin (Ado-cobalamin). Also synthesizes adenosylcobalamin 5'-phosphate from adenosylcobinamide-GDP and alpha-ribazole 5'-phosphate. The polypeptide is Adenosylcobinamide-GDP ribazoletransferase (Rhizobium meliloti (strain 1021) (Ensifer meliloti)).